A 206-amino-acid polypeptide reads, in one-letter code: MKCDVKTLDGKDAGSIELSDSVFGLPVRTDLLHRMVRWQLARRQAGTHKTKGISEISGTTAKPFKQKGTGHARQGSKRSPQFRGGATIFGPVVRSHAHDLNKKVRKLGLKTALSAKAQAGQLIVLDQAISESGKTKDLLAQLKVLGLEKVLFIDGPEVNEKFALAARNIIGLDVLPQQGANVYDILRRDTLVLTKEAVKHLEERLQ.

Positions 60-84 (TAKPFKQKGTGHARQGSKRSPQFRG) are disordered. The segment covering 64 to 76 (FKQKGTGHARQGS) has biased composition (basic residues).

This sequence belongs to the universal ribosomal protein uL4 family. As to quaternary structure, part of the 50S ribosomal subunit.

In terms of biological role, one of the primary rRNA binding proteins, this protein initially binds near the 5'-end of the 23S rRNA. It is important during the early stages of 50S assembly. It makes multiple contacts with different domains of the 23S rRNA in the assembled 50S subunit and ribosome. Functionally, forms part of the polypeptide exit tunnel. The chain is Large ribosomal subunit protein uL4 from Rhodospirillum rubrum (strain ATCC 11170 / ATH 1.1.1 / DSM 467 / LMG 4362 / NCIMB 8255 / S1).